The primary structure comprises 104 residues: Large ribosomal subunit protein bL21 (104 aa).

It belongs to the bacterial ribosomal protein bL21 family. In terms of assembly, part of the 50S ribosomal subunit. Contacts protein L20.

Functionally, this protein binds to 23S rRNA in the presence of protein L20. The sequence is that of Large ribosomal subunit protein bL21 from Pseudomonas entomophila (strain L48).